We begin with the raw amino-acid sequence, 236 residues long: 2,3,4,5-tetrahydropyridine-2,6-dicarboxylate N-acetyltransferase (236 aa).

The protein belongs to the transferase hexapeptide repeat family. DapH subfamily.

It catalyses the reaction (S)-2,3,4,5-tetrahydrodipicolinate + acetyl-CoA + H2O = L-2-acetamido-6-oxoheptanedioate + CoA. It functions in the pathway amino-acid biosynthesis; L-lysine biosynthesis via DAP pathway; LL-2,6-diaminopimelate from (S)-tetrahydrodipicolinate (acetylase route): step 1/3. Functionally, catalyzes the transfer of an acetyl group from acetyl-CoA to tetrahydrodipicolinate. The protein is 2,3,4,5-tetrahydropyridine-2,6-dicarboxylate N-acetyltransferase of Listeria monocytogenes serotype 4b (strain CLIP80459).